Here is an 863-residue protein sequence, read N- to C-terminus: Oleate activated transcription factor 3 (863 aa).

Residues 18-47 (VCTNCKKRKSKCDRTKPCGTCVRLGDVDSC) constitute a DNA-binding region (zn(2)-C6 fungal-type). Polar residues predominate over residues 52–63 (DSSGQPESSPSL). Positions 52-99 (DSSGQPESSPSLNDADPLRKQSTPAERISPGFIKKRRSSQTRQDEDHW) are disordered.

The protein belongs to the OAF3 family.

It is found in the cytoplasm. The protein resides in the nucleus. The protein localises to the mitochondrion. Functionally, transcriptional inhibitor with a significantly increased number of target genes in response to oleate. The chain is Oleate activated transcription factor 3 (OAF3) from Saccharomyces cerevisiae (strain ATCC 204508 / S288c) (Baker's yeast).